Here is a 503-residue protein sequence, read N- to C-terminus: Activin receptor type-1-like (503 aa).

The N-terminal stretch at 1 to 21 (MTLGSPRKGLLMLLMALVTQG) is a signal peptide. At 22–118 (DPVKPSRGPL…PSEQPGTDGQ (97 aa)) the chain is on the extracellular side. 3 disulfide bridges follow: C34–C51, C36–C41, and C46–C69. The segment at 73 to 76 (HREL) is mediates specificity for BMP ligand. 2 cysteine pairs are disulfide-bonded: C77-C89 and C90-C95. N-linked (GlcNAc...) asparagine glycosylation is present at N98. The chain crosses the membrane as a helical span at residues 119-141 (LALILGPVLALLALVALGVLGLW). Residues 142–503 (HVRRRQEKQR…NSPEKPKVIQ (362 aa)) lie on the Cytoplasmic side of the membrane. A phosphoserine mark is found at S155, S160, and S161. Positions 172-201 (SMLGDLLDSDCTTGSGSGLPFLVQRTVARQ) constitute a GS domain. The region spanning 202–492 (VALVECVGKG…LRIKKTLQKI (291 aa)) is the Protein kinase domain. ATP-binding positions include 208-216 (VGKGRYGEV) and K229. D330 acts as the Proton acceptor in catalysis.

This sequence belongs to the protein kinase superfamily. TKL Ser/Thr protein kinase family. TGFB receptor subfamily. As to quaternary structure, interacts with TSC22D1/TSC-22. Mg(2+) is required as a cofactor. It depends on Mn(2+) as a cofactor.

The protein localises to the cell membrane. The catalysed reaction is L-threonyl-[receptor-protein] + ATP = O-phospho-L-threonyl-[receptor-protein] + ADP + H(+). The enzyme catalyses L-seryl-[receptor-protein] + ATP = O-phospho-L-seryl-[receptor-protein] + ADP + H(+). In terms of biological role, type I receptor for TGF-beta family ligands BMP9/GDF2 and BMP10 and important regulator of normal blood vessel development. On ligand binding, forms a receptor complex consisting of two type II and two type I transmembrane serine/threonine kinases. Type II receptors phosphorylate and activate type I receptors which autophosphorylate, then bind and activate SMAD transcriptional regulators. May bind activin as well. The sequence is that of Activin receptor type-1-like (ACVRL1) from Homo sapiens (Human).